The following is a 346-amino-acid chain: Elongation factor Ts (346 aa).

The tract at residues 80–83 (TDFV) is involved in Mg(2+) ion dislocation from EF-Tu.

This sequence belongs to the EF-Ts family.

The protein resides in the cytoplasm. In terms of biological role, associates with the EF-Tu.GDP complex and induces the exchange of GDP to GTP. It remains bound to the aminoacyl-tRNA.EF-Tu.GTP complex up to the GTP hydrolysis stage on the ribosome. The chain is Elongation factor Ts from Streptococcus pneumoniae serotype 19F (strain G54).